Consider the following 210-residue polypeptide: Glutathione S-transferase P 10 (210 aa).

One can recognise a GST N-terminal domain in the interval 2 to 81 (AVPQLYYFTI…HLGRVHGLNG (80 aa)). Residues tyrosine 8, tryptophan 41, lysine 45, 52-53 (QL), and 65-66 (QT) each bind glutathione. The GST C-terminal domain occupies 83–200 (NEQEATFLDM…YLEKRKADKV (118 aa)).

It belongs to the GST superfamily. Pi family. In terms of assembly, homodimer. Expressed in cells at the mouth and adjacent to the pharyngeal bulbs of the head and also in the tail.

The catalysed reaction is RX + glutathione = an S-substituted glutathione + a halide anion + H(+). Functionally, conjugation of reduced glutathione to a wide number of exogenous and endogenous hydrophobic electrophiles. Responsible for approximately one-third of 4-hydroxy-2-nonenal conjugation. May play a role in the detoxification of reactive oxygen species produced during pathogenic bacterial infection. The protein is Glutathione S-transferase P 10 of Caenorhabditis elegans.